Here is a 264-residue protein sequence, read N- to C-terminus: Thymidylate synthase (264 aa).

Arg21 provides a ligand contact to dUMP. (6R)-5,10-methylene-5,6,7,8-tetrahydrofolate is bound at residue His51. A dUMP-binding site is contributed by 126–127 (RR). The active-site Nucleophile is Cys146. DUMP is bound by residues 166-169 (RSAD), Asn177, and 207-209 (HIY). Asp169 lines the (6R)-5,10-methylene-5,6,7,8-tetrahydrofolate pocket. A (6R)-5,10-methylene-5,6,7,8-tetrahydrofolate-binding site is contributed by Ala263.

Belongs to the thymidylate synthase family. Bacterial-type ThyA subfamily. Homodimer.

It is found in the cytoplasm. It catalyses the reaction dUMP + (6R)-5,10-methylene-5,6,7,8-tetrahydrofolate = 7,8-dihydrofolate + dTMP. Its pathway is pyrimidine metabolism; dTTP biosynthesis. Functionally, catalyzes the reductive methylation of 2'-deoxyuridine-5'-monophosphate (dUMP) to 2'-deoxythymidine-5'-monophosphate (dTMP) while utilizing 5,10-methylenetetrahydrofolate (mTHF) as the methyl donor and reductant in the reaction, yielding dihydrofolate (DHF) as a by-product. This enzymatic reaction provides an intracellular de novo source of dTMP, an essential precursor for DNA biosynthesis. In Brucella abortus (strain 2308), this protein is Thymidylate synthase.